We begin with the raw amino-acid sequence, 193 residues long: Bcl-2-binding component 3, isoforms 1/2 (193 aa).

2 disordered regions span residues 1-28 (MARA…FPLG) and 71-138 (ALGG…REIG). A Phosphoserine modification is found at Ser10. Residues 71 to 82 (ALGGSRWPGGPR) show a composition bias toward low complexity. The BH3 signature appears at 137–151 (IGAQLRRMADDLNAQ).

This sequence belongs to the Bcl-2 family. Interacts with MCL1 and BCL2A1. Interacts (via BH3 domain) with BCL2. Interacts with BCL2L1/BCL-XL. Interacts (via BH3 domain) with NOL3/ARC (via CARD domain); this interaction prevents BBC3 association with BCL2 and results in CASP8 activation. In terms of tissue distribution, ubiquitously expressed.

It localises to the mitochondrion. In terms of biological role, essential mediator of p53/TP53-dependent and p53/TP53-independent apoptosis. Promotes partial unfolding of BCL2L1 and dissociation of BCL2L1 from p53/TP53, releasing the bound p53/TP53 to induce apoptosis. Regulates ER stress-induced neuronal apoptosis. The protein is Bcl-2-binding component 3, isoforms 1/2 (BBC3) of Homo sapiens (Human).